Here is a 527-residue protein sequence, read N- to C-terminus: Bifunctional purine biosynthesis protein PurH (527 aa).

Residues 1–149 (MASDFLPVRR…KNFARVAVAT (149 aa)) form the MGS-like domain.

It belongs to the PurH family.

It catalyses the reaction (6R)-10-formyltetrahydrofolate + 5-amino-1-(5-phospho-beta-D-ribosyl)imidazole-4-carboxamide = 5-formamido-1-(5-phospho-D-ribosyl)imidazole-4-carboxamide + (6S)-5,6,7,8-tetrahydrofolate. It carries out the reaction IMP + H2O = 5-formamido-1-(5-phospho-D-ribosyl)imidazole-4-carboxamide. It participates in purine metabolism; IMP biosynthesis via de novo pathway; 5-formamido-1-(5-phospho-D-ribosyl)imidazole-4-carboxamide from 5-amino-1-(5-phospho-D-ribosyl)imidazole-4-carboxamide (10-formyl THF route): step 1/1. It functions in the pathway purine metabolism; IMP biosynthesis via de novo pathway; IMP from 5-formamido-1-(5-phospho-D-ribosyl)imidazole-4-carboxamide: step 1/1. This Xanthomonas euvesicatoria pv. vesicatoria (strain 85-10) (Xanthomonas campestris pv. vesicatoria) protein is Bifunctional purine biosynthesis protein PurH.